Here is a 266-residue protein sequence, read N- to C-terminus: Tryptophan synthase alpha chain (266 aa).

Active-site proton acceptor residues include glutamate 52 and aspartate 63.

The protein belongs to the TrpA family. In terms of assembly, tetramer of two alpha and two beta chains.

The enzyme catalyses (1S,2R)-1-C-(indol-3-yl)glycerol 3-phosphate + L-serine = D-glyceraldehyde 3-phosphate + L-tryptophan + H2O. It functions in the pathway amino-acid biosynthesis; L-tryptophan biosynthesis; L-tryptophan from chorismate: step 5/5. The alpha subunit is responsible for the aldol cleavage of indoleglycerol phosphate to indole and glyceraldehyde 3-phosphate. This Nocardia farcinica (strain IFM 10152) protein is Tryptophan synthase alpha chain.